The primary structure comprises 243 residues: Zinc import ATP-binding protein ZnuC (243 aa).

The region spanning 4–219 (IAAHHLAVRR…PEYRALFGHG (216 aa)) is the ABC transporter domain. Position 36 to 43 (36 to 43 (GPNGSGKS)) interacts with ATP.

This sequence belongs to the ABC transporter superfamily. Zinc importer (TC 3.A.1.15.5) family. As to quaternary structure, the complex is composed of two ATP-binding proteins (ZnuC), two transmembrane proteins (ZnuB) and a solute-binding protein (ZnuA).

The protein resides in the cell inner membrane. The catalysed reaction is Zn(2+)(out) + ATP(in) + H2O(in) = Zn(2+)(in) + ADP(in) + phosphate(in) + H(+)(in). Its function is as follows. Part of the ABC transporter complex ZnuABC involved in zinc import. Responsible for energy coupling to the transport system. This chain is Zinc import ATP-binding protein ZnuC, found in Cereibacter sphaeroides (strain ATCC 17023 / DSM 158 / JCM 6121 / CCUG 31486 / LMG 2827 / NBRC 12203 / NCIMB 8253 / ATH 2.4.1.) (Rhodobacter sphaeroides).